An 88-amino-acid chain; its full sequence is MGIARILSAVLFLSVLFVVTFPTLLSADHHDGRIDTCRLPSDRGRCKASFERWYFNGTTCTKFVYGGYGGNDNRFPTEKACMERCAKA.

Positions 1 to 27 (MGIARILSAVLFLSVLFVVTFPTLLSA) are cleaved as a signal peptide. Residues 28–33 (DHHDGR) constitute a propeptide that is removed on maturation. The 49-residue stretch at 37-85 (CRLPSDRGRCKASFERWYFNGTTCTKFVYGGYGGNDNRFPTEKACMERC) folds into the BPTI/Kunitz inhibitor domain. 2 cysteine pairs are disulfide-bonded: Cys37-Cys85 and Cys60-Cys81.

It belongs to the venom Kunitz-type family. 01 (intermediate) subfamily. In terms of tissue distribution, expressed by the venom gland.

It is found in the secreted. In terms of biological role, serine protease inhibitor that inhibits trypsin at a molar ratio of 1:1. In Cyriopagopus hainanus (Chinese bird spider), this protein is Kunitz-type U15-theraphotoxin-Hhn1q.